A 122-amino-acid polypeptide reads, in one-letter code: Large ribosomal subunit protein uL14c (122 aa).

This sequence belongs to the universal ribosomal protein uL14 family. In terms of assembly, part of the 50S ribosomal subunit.

It localises to the plastid. Its subcellular location is the chloroplast. In terms of biological role, binds to 23S rRNA. This chain is Large ribosomal subunit protein uL14c, found in Phaseolus vulgaris (Kidney bean).